Here is a 728-residue protein sequence, read N- to C-terminus: Catalase-peroxidase (728 aa).

A signal peptide spans 1-16; sequence MDNPTDSAGKCPVAHG. The tract at residues 1-26 is disordered; that stretch reads MDNPTDSAGKCPVAHGNTPRSRSNRD. The segment at residues 96–218 is a cross-link (tryptophyl-tyrosyl-methioninium (Trp-Tyr) (with M-244)); it reads WHSAGTYRIT…LGAVQMGFIY (123 aa). The active-site Proton acceptor is the His97. Residues 218 to 244 constitute a cross-link (tryptophyl-tyrosyl-methioninium (Tyr-Met) (with W-96)); sequence YVNPEGPNGNSDPLASARDIRETFARM. His259 provides a ligand contact to heme b.

It belongs to the peroxidase family. Peroxidase/catalase subfamily. Homodimer or homotetramer. The cofactor is heme b. Post-translationally, formation of the three residue Trp-Tyr-Met cross-link is important for the catalase, but not the peroxidase activity of the enzyme.

The enzyme catalyses H2O2 + AH2 = A + 2 H2O. The catalysed reaction is 2 H2O2 = O2 + 2 H2O. Functionally, bifunctional enzyme with both catalase and broad-spectrum peroxidase activity. This is Catalase-peroxidase from Rhizobium leguminosarum bv. phaseoli.